The primary structure comprises 474 residues: tRNA-2-methylthio-N(6)-dimethylallyladenosine synthase (474 aa).

Residues 3–120 form the MTTase N-terminal domain; that stretch reads KKLLIKTWGC…LPQMIKDSQS (118 aa). C12, C49, C83, C157, C161, and C164 together coordinate [4Fe-4S] cluster. The region spanning 143–375 is the Radical SAM core domain; that stretch reads RADGVTAFVS…QQQINTQAMR (233 aa). One can recognise a TRAM domain in the interval 378–441; the sequence is RQMLNTEQRI…TNSLRGELVR (64 aa).

Belongs to the methylthiotransferase family. MiaB subfamily. As to quaternary structure, monomer. [4Fe-4S] cluster is required as a cofactor.

The protein localises to the cytoplasm. The catalysed reaction is N(6)-dimethylallyladenosine(37) in tRNA + (sulfur carrier)-SH + AH2 + 2 S-adenosyl-L-methionine = 2-methylsulfanyl-N(6)-dimethylallyladenosine(37) in tRNA + (sulfur carrier)-H + 5'-deoxyadenosine + L-methionine + A + S-adenosyl-L-homocysteine + 2 H(+). Functionally, catalyzes the methylthiolation of N6-(dimethylallyl)adenosine (i(6)A), leading to the formation of 2-methylthio-N6-(dimethylallyl)adenosine (ms(2)i(6)A) at position 37 in tRNAs that read codons beginning with uridine. The polypeptide is tRNA-2-methylthio-N(6)-dimethylallyladenosine synthase (Photobacterium profundum (strain SS9)).